The sequence spans 257 residues: Phosphonates import ATP-binding protein PhnC (257 aa).

In terms of domain architecture, ABC transporter spans 4–248; it reads IKFKNVSKVY…VFSKIYGRTI (245 aa). ATP is bound at residue 37–44; the sequence is GLSGAGKS.

This sequence belongs to the ABC transporter superfamily. Phosphonates importer (TC 3.A.1.9.1) family. In terms of assembly, the complex is composed of two ATP-binding proteins (PhnC), two transmembrane proteins (PhnE) and a solute-binding protein (PhnD).

Its subcellular location is the cell membrane. The catalysed reaction is phosphonate(out) + ATP + H2O = phosphonate(in) + ADP + phosphate + H(+). Its function is as follows. Part of the ABC transporter complex PhnCDE involved in phosphonates import. Responsible for energy coupling to the transport system. This chain is Phosphonates import ATP-binding protein PhnC, found in Staphylococcus aureus (strain MRSA252).